A 114-amino-acid polypeptide reads, in one-letter code: MGIRLLCRVAFCFLAVGLVDVKVTQSSRYLVKRTGEKVFLECVQDMDHENMFWYRQDPGLGLRLIYFSYDVKMKEKGDIPEGYSVSREKKERFSLILESASTNQTSMYLCASSL.

Positions 1–26 (MGIRLLCRVAFCFLAVGLVDVKVTQS) are cleaved as a signal peptide. Positions 27 to 114 (SRYLVKRTGE…TSMYLCASSL (88 aa)) constitute an Ig-like domain. A disulfide bridge connects residues Cys-42 and Cys-110. The N-linked (GlcNAc...) asparagine glycan is linked to Asn-103.

Alpha-beta TR is a heterodimer composed of an alpha and beta chain; disulfide-linked. The alpha-beta TR is associated with the transmembrane signaling CD3 coreceptor proteins to form the TR-CD3 (TcR or TCR). The assembly of alpha-beta TR heterodimers with CD3 occurs in the endoplasmic reticulum where a single alpha-beta TR heterodimer associates with one CD3D-CD3E heterodimer, one CD3G-CD3E heterodimer and one CD247 homodimer forming a stable octameric structure. CD3D-CD3E and CD3G-CD3E heterodimers preferentially associate with TR alpha and TR beta chains, respectively. The association of the CD247 homodimer is the last step of TcR assembly in the endoplasmic reticulum and is required for transport to the cell surface.

The protein localises to the cell membrane. Functionally, v region of the variable domain of T cell receptor (TR) beta chain that participates in the antigen recognition. Alpha-beta T cell receptors are antigen specific receptors which are essential to the immune response and are present on the cell surface of T lymphocytes. Recognize peptide-major histocompatibility (MH) (pMH) complexes that are displayed by antigen presenting cells (APC), a prerequisite for efficient T cell adaptive immunity against pathogens. Binding of alpha-beta TR to pMH complex initiates TR-CD3 clustering on the cell surface and intracellular activation of LCK that phosphorylates the ITAM motifs of CD3G, CD3D, CD3E and CD247 enabling the recruitment of ZAP70. In turn ZAP70 phosphorylates LAT, which recruits numerous signaling molecules to form the LAT signalosome. The LAT signalosome propagates signal branching to three major signaling pathways, the calcium, the mitogen-activated protein kinase (MAPK) kinase and the nuclear factor NF-kappa-B (NF-kB) pathways, leading to the mobilization of transcription factors that are critical for gene expression and essential for T cell growth and differentiation. The T cell repertoire is generated in the thymus, by V-(D)-J rearrangement. This repertoire is then shaped by intrathymic selection events to generate a peripheral T cell pool of self-MH restricted, non-autoaggressive T cells. Post-thymic interaction of alpha-beta TR with the pMH complexes shapes TR structural and functional avidity. This chain is T cell receptor beta variable 28, found in Homo sapiens (Human).